The chain runs to 78 residues: Large ribosomal subunit protein bL28 (78 aa).

It belongs to the bacterial ribosomal protein bL28 family.

The sequence is that of Large ribosomal subunit protein bL28 from Tropheryma whipplei (strain TW08/27) (Whipple's bacillus).